The primary structure comprises 4486 residues: Dynein axonemal heavy chain 9 (4486 aa).

Residues 1–1831 (MRLAEERAAL…FANICDAQFL (1831 aa)) form a stem region. Coiled-coil stretches lie at residues 381-410 (DLLR…EFQD), 504-529 (QSTD…LGTI), 639-662 (AEGK…ETRL), 752-823 (TLLE…TWVT), and 1326-1355 (NINV…AWDA). 4 AAA regions span residues 1832–2053 (YSYE…VLVV), 2113–2334 (ALVR…TRFK), 2440–2688 (EFDP…IFQG), and 2787–3036 (NHNE…EQRY). Residues 1870-1877 (GPAGTGKT), 2151-2158 (GGAGTGKS), 2478-2485 (GTAGTGKS), and 2825-2832 (GVGGSGKQ) contribute to the ATP site. Coiled-coil stretches lie at residues 3051 to 3154 (YQSL…AKAE), 3285 to 3341 (KRQA…AEVT), and 3640 to 3675 (LVEN…REHY). Residues 3051-3341 (YQSLLHRHRK…LKCQQEAEVT (291 aa)) are stalk. 2 AAA regions span residues 3429 to 3656 (LMDD…EVEK) and 3866 to 4092 (LRDF…VLYN).

It belongs to the dynein heavy chain family. Consists of at least two heavy chains and a number of intermediate and light chains. Interacts with ODAD1. Expressed in upper and lower respiratory airway epithelia (at protein level). Not detected in spermatozoa (at protein level).

It is found in the cytoplasm. The protein localises to the cytoskeleton. The protein resides in the cilium axoneme. Its function is as follows. Force generating protein required for cilia beating in respiratory epithelia. Produces force towards the minus ends of microtubules. Dynein has ATPase activity; the force-producing power stroke is thought to occur on release of ADP. This chain is Dynein axonemal heavy chain 9, found in Homo sapiens (Human).